Consider the following 59-residue polypeptide: Large ribosomal subunit protein uL30 (59 aa).

This sequence belongs to the universal ribosomal protein uL30 family. Part of the 50S ribosomal subunit.

This Mycolicibacterium vanbaalenii (strain DSM 7251 / JCM 13017 / BCRC 16820 / KCTC 9966 / NRRL B-24157 / PYR-1) (Mycobacterium vanbaalenii) protein is Large ribosomal subunit protein uL30.